A 134-amino-acid polypeptide reads, in one-letter code: ATP synthase epsilon chain, chloroplastic (134 aa).

Belongs to the ATPase epsilon chain family. In terms of assembly, F-type ATPases have 2 components, CF(1) - the catalytic core - and CF(0) - the membrane proton channel. CF(1) has five subunits: alpha(3), beta(3), gamma(1), delta(1), epsilon(1). CF(0) has three main subunits: a, b and c.

It is found in the plastid. Its subcellular location is the chloroplast thylakoid membrane. Its function is as follows. Produces ATP from ADP in the presence of a proton gradient across the membrane. The protein is ATP synthase epsilon chain, chloroplastic of Porphyra purpurea (Red seaweed).